Here is a 137-residue protein sequence, read N- to C-terminus: Thionin BTH7 (137 aa).

The signal sequence occupies residues 1–28; it reads MATNKSIKSVVICVLILGLVLEQVQVEG. 4 disulfide bridges follow: cysteine 31–cysteine 68, cysteine 32–cysteine 60, cysteine 40–cysteine 58, and cysteine 44–cysteine 54. The propeptide at 75-137 is acidic domain; sequence LNLLPESGEP…DGEVIQSVEA (63 aa).

This sequence belongs to the plant thionin (TC 1.C.44) family. 4 C-C subfamily.

Its subcellular location is the secreted. Its function is as follows. Thionins are small plant proteins which are toxic to animal cells. They seem to exert their toxic effect at the level of the cell membrane. Their precise function is not known. The chain is Thionin BTH7 from Hordeum vulgare (Barley).